The primary structure comprises 135 residues: Large ribosomal subunit protein uL18 (135 aa).

Residues 1–23 (MAQTQADTAARKPVGQSVSATRR) are disordered.

It belongs to the universal ribosomal protein uL18 family. In terms of assembly, part of the 50S ribosomal subunit; part of the 5S rRNA/L5/L18/L25 subcomplex. Contacts the 5S and 23S rRNAs.

Functionally, this is one of the proteins that bind and probably mediate the attachment of the 5S RNA into the large ribosomal subunit, where it forms part of the central protuberance. This is Large ribosomal subunit protein uL18 from Mycobacterium marinum (strain ATCC BAA-535 / M).